Reading from the N-terminus, the 273-residue chain is HTH-type transcriptional activator RhaS (273 aa).

Positions 174–272 (YQLLDWLQNN…SQSPRDLRSQ (99 aa)) constitute an HTH araC/xylS-type domain. 2 DNA-binding regions (H-T-H motif) span residues 191 to 212 (PELA…KNKT) and 239 to 262 (VTDI…KREF).

As to quaternary structure, binds DNA as a dimer.

The protein resides in the cytoplasm. In terms of biological role, activates expression of the rhaBAD and rhaT operons. This Yersinia pestis bv. Antiqua (strain Antiqua) protein is HTH-type transcriptional activator RhaS.